Here is a 64-residue protein sequence, read N- to C-terminus: Large ribosomal subunit protein bL35c (64 aa).

It belongs to the bacterial ribosomal protein bL35 family.

It localises to the plastid. It is found in the chloroplast. The polypeptide is Large ribosomal subunit protein bL35c (Phaeodactylum tricornutum (strain CCAP 1055/1)).